Here is a 952-residue protein sequence, read N- to C-terminus: Disintegrin and metalloproteinase domain-containing protein adm-2 (952 aa).

Topologically, residues methionine 1–threonine 672 are extracellular. Asparagine 125 and asparagine 301 each carry an N-linked (GlcNAc...) asparagine glycan. Residues arginine 177–proline 373 form the Peptidase M12B domain. 3 disulfide bridges follow: cysteine 287/cysteine 368, cysteine 330/cysteine 352, and cysteine 332/cysteine 337. Histidine 312 is a binding site for Zn(2+). The active site involves glutamate 313. Zn(2+) contacts are provided by histidine 316 and histidine 322. The 88-residue stretch at aspartate 379 to asparagine 466 folds into the Disintegrin domain. An N-linked (GlcNAc...) asparagine glycan is attached at asparagine 406. 4 disulfides stabilise this stretch: cysteine 438–cysteine 458, cysteine 624–cysteine 634, cysteine 628–cysteine 640, and cysteine 642–cysteine 651. Positions valine 620 to glutamate 652 constitute an EGF-like domain. A helical membrane pass occupies residues leucine 673 to valine 693. The Cytoplasmic portion of the chain corresponds to tyrosine 694–lysine 952. 2 disordered regions span residues isoleucine 778–threonine 809 and serine 829–aspartate 938. 2 stretches are compositionally biased toward basic and acidic residues: residues alanine 798 to threonine 809 and proline 849 to asparagine 873. Pro residues predominate over residues glutamine 905 to histidine 914. Basic and acidic residues predominate over residues lysine 925–aspartate 938.

It depends on Zn(2+) as a cofactor. Expressed in hyp7 large epidermal syncytium (punctate distribution), seam cell syncytia, anterior epidermis, neurons located in the head, tail and central body, proximal oogenic cells (levels increasing in maturing oocytes) and myoepithelial cells of the spermatheca (at protein level). Not detected in mature sperm cells.

The protein localises to the cell membrane. It is found in the endosome membrane. Its subcellular location is the lysosome membrane. Its function is as follows. Metalloprotease that cleaves and releases a number of molecules. Negative regulator of lrp-1 protein levels, potentially by influencing its endosomal trafficking. Involved in regulating the molting process. The chain is Disintegrin and metalloproteinase domain-containing protein adm-2 from Caenorhabditis elegans.